Reading from the N-terminus, the 339-residue chain is Adenylosuccinate synthetase (339 aa).

GTP contacts are provided by residues 12-18 (GDEGKGS) and 42-44 (GHS). Residue aspartate 13 is the Proton acceptor of the active site. Residues aspartate 13 and glycine 42 each coordinate Mg(2+). IMP-binding positions include 13-16 (DEGK), 40-43 (NAGH), threonine 127, arginine 141, glutamine 179, threonine 194, and arginine 256. The active-site Proton donor is the histidine 43. Residue 252 to 258 (TVTGRRR) participates in substrate binding. GTP-binding positions include arginine 258, 284–286 (MLD), and 324–326 (KTG).

It belongs to the adenylosuccinate synthetase family. Homodimer. Mg(2+) serves as cofactor.

The protein localises to the cytoplasm. It carries out the reaction IMP + L-aspartate + GTP = N(6)-(1,2-dicarboxyethyl)-AMP + GDP + phosphate + 2 H(+). The protein operates within purine metabolism; AMP biosynthesis via de novo pathway; AMP from IMP: step 1/2. In terms of biological role, plays an important role in the de novo pathway of purine nucleotide biosynthesis. Catalyzes the first committed step in the biosynthesis of AMP from IMP. In Pyrococcus sp. (strain ST700), this protein is Adenylosuccinate synthetase.